Here is a 345-residue protein sequence, read N- to C-terminus: Protein-arginine kinase (345 aa).

The 231-residue stretch at 15-245 folds into the Phosphagen kinase C-terminal domain; that stretch reads LVISSRIRLA…LQIINQEIIS (231 aa). Residues 18 to 22, histidine 82, arginine 116, 167 to 171, and 198 to 203 contribute to the ATP site; these read SSRIR, RASVM, and RGLYGE. The short motif at 328 to 333 is the RDXXRA motif of the pArg binding pocket involved in allosteric regulation element; that stretch reads RDFNRA.

This sequence belongs to the ATP:guanido phosphotransferase family.

The enzyme catalyses L-arginyl-[protein] + ATP = N(omega)-phospho-L-arginyl-[protein] + ADP + H(+). Appears to be allosterically activated by the binding of pArg-containing polypeptides to the pArg-binding pocket localized in the C-terminal domain of McsB. Catalyzes the specific phosphorylation of arginine residues in proteins. The chain is Protein-arginine kinase from Clostridium kluyveri (strain NBRC 12016).